Here is a 161-residue protein sequence, read N- to C-terminus: Allophycocyanin alpha chain (161 aa).

Asparagine 71 bears the N4-methylasparagine mark. Cysteine 81 is a (2R,3E)-phycocyanobilin binding site.

Belongs to the phycobiliprotein family. Heterodimer of an alpha and a beta chain. Post-translationally, contains one covalently linked phycocyanobilin chromophore.

It is found in the plastid. The protein resides in the chloroplast thylakoid membrane. Functionally, light-harvesting photosynthetic bile pigment-protein from the phycobiliprotein complex. Allophycocyanin has a maximum absorption at approximately 650 nanometers. The polypeptide is Allophycocyanin alpha chain (apcA) (Pyropia haitanensis (Red seaweed)).